The following is a 249-amino-acid chain: Phosphomannomutase (249 aa).

The active-site Nucleophile is Asp-15. Mg(2+)-binding residues include Asp-15 and Asp-17. Asp-17 serves as the catalytic Proton donor/acceptor. Alpha-D-mannose 1-phosphate-binding residues include Arg-24, Arg-126, Arg-137, Arg-144, Ser-182, and Asp-184. Positions 210, 222, and 227 each coordinate Mg(2+).

This sequence belongs to the eukaryotic PMM family. Homodimer. Mg(2+) is required as a cofactor. As to expression, expressed in roots, leaves, flag leaves and immature spikes.

Its subcellular location is the cytoplasm. The enzyme catalyses alpha-D-mannose 1-phosphate = D-mannose 6-phosphate. It functions in the pathway nucleotide-sugar biosynthesis; GDP-alpha-D-mannose biosynthesis; alpha-D-mannose 1-phosphate from D-fructose 6-phosphate: step 2/2. Functionally, catalyzes the interconversion of mannose-6-phosphate to mannose-1-phosphate, the precursor for the synthesis of GDP-mannose. GDP-mannose is an essential sugar nucleotide for the synthesis of D-mannose-containing cell wall polysaccharides (galactomannans and glucomannans), glycolipids, glycoproteins and the antioxidant L-ascorbate. Can complement the yeast temperature-sensitive mutant sec53-6. In Triticum aestivum (Wheat), this protein is Phosphomannomutase.